Reading from the N-terminus, the 268-residue chain is Undecaprenyl-diphosphatase (268 aa).

A run of 7 helical transmembrane segments spans residues 5–25 (SIIS…IPVS), 43–63 (GNTF…LVYF), 84–104 (FSVL…HGFI), 107–127 (VLFE…IILY), 184–204 (AAEF…ALDL), 213–233 (FDDV…GIFV), and 248–268 (PFAI…WLLG).

It belongs to the UppP family.

It localises to the cell inner membrane. The catalysed reaction is di-trans,octa-cis-undecaprenyl diphosphate + H2O = di-trans,octa-cis-undecaprenyl phosphate + phosphate + H(+). Functionally, catalyzes the dephosphorylation of undecaprenyl diphosphate (UPP). Confers resistance to bacitracin. The chain is Undecaprenyl-diphosphatase from Rhizobium meliloti (strain 1021) (Ensifer meliloti).